We begin with the raw amino-acid sequence, 210 residues long: Large ribosomal subunit protein uL3 (210 aa).

Belongs to the universal ribosomal protein uL3 family. As to quaternary structure, part of the 50S ribosomal subunit. Forms a cluster with proteins L14 and L19.

One of the primary rRNA binding proteins, it binds directly near the 3'-end of the 23S rRNA, where it nucleates assembly of the 50S subunit. This Caldicellulosiruptor bescii (strain ATCC BAA-1888 / DSM 6725 / KCTC 15123 / Z-1320) (Anaerocellum thermophilum) protein is Large ribosomal subunit protein uL3.